Consider the following 298-residue polypeptide: Acetylglutamate kinase (298 aa).

Residues glycine 69–glycine 70, arginine 91, and asparagine 191 each bind substrate.

It belongs to the acetylglutamate kinase family. ArgB subfamily.

The protein resides in the cytoplasm. It catalyses the reaction N-acetyl-L-glutamate + ATP = N-acetyl-L-glutamyl 5-phosphate + ADP. The protein operates within amino-acid biosynthesis; L-arginine biosynthesis; N(2)-acetyl-L-ornithine from L-glutamate: step 2/4. Catalyzes the ATP-dependent phosphorylation of N-acetyl-L-glutamate. The sequence is that of Acetylglutamate kinase from Neisseria meningitidis serogroup A / serotype 4A (strain DSM 15465 / Z2491).